Here is a 404-residue protein sequence, read N- to C-terminus: Glucose-1-phosphate adenylyltransferase (404 aa).

Residues Tyr-99, Gly-164, 179–180 (EK), and Ser-197 contribute to the alpha-D-glucose 1-phosphate site.

This sequence belongs to the bacterial/plant glucose-1-phosphate adenylyltransferase family.

The catalysed reaction is alpha-D-glucose 1-phosphate + ATP + H(+) = ADP-alpha-D-glucose + diphosphate. The protein operates within capsule biogenesis; capsule polysaccharide biosynthesis. It functions in the pathway glycan biosynthesis; glycogen biosynthesis. Involved in the biosynthesis of ADP-glucose, a building block, required in the biosynthesis of maltose-1-phosphate (M1P) and in the elongation reactions to produce linear alpha-1,4-glucans. Catalyzes the reaction between ATP and alpha-D-glucose 1-phosphate (G1P) to produce pyrophosphate and ADP-Glc. The polypeptide is Glucose-1-phosphate adenylyltransferase (Mycolicibacterium paratuberculosis (strain ATCC BAA-968 / K-10) (Mycobacterium paratuberculosis)).